The sequence spans 406 residues: Argininosuccinate synthase (406 aa).

Residues 11–19 (AYSGGLDTS) and Ala-38 contribute to the ATP site. 2 residues coordinate L-citrulline: Tyr-91 and Ser-96. Gly-121 is a binding site for ATP. L-aspartate contacts are provided by Thr-123, Asn-127, and Asp-128. Residue Asn-127 coordinates L-citrulline. The L-citrulline site is built by Arg-131, Ser-181, Ser-190, Glu-266, and Tyr-278.

The protein belongs to the argininosuccinate synthase family. Type 1 subfamily. As to quaternary structure, homotetramer.

It is found in the cytoplasm. The enzyme catalyses L-citrulline + L-aspartate + ATP = 2-(N(omega)-L-arginino)succinate + AMP + diphosphate + H(+). It functions in the pathway amino-acid biosynthesis; L-arginine biosynthesis; L-arginine from L-ornithine and carbamoyl phosphate: step 2/3. This chain is Argininosuccinate synthase, found in Campylobacter jejuni subsp. doylei (strain ATCC BAA-1458 / RM4099 / 269.97).